A 90-amino-acid polypeptide reads, in one-letter code: DNA-directed RNA polymerase subunit Rpo11 (90 aa).

The protein belongs to the archaeal Rpo11/eukaryotic RPB11/RPC19 RNA polymerase subunit family. Part of the 13-subunit RNA polymerase complex.

Its subcellular location is the cytoplasm. The enzyme catalyses RNA(n) + a ribonucleoside 5'-triphosphate = RNA(n+1) + diphosphate. Functionally, DNA-dependent RNA polymerase (RNAP) catalyzes the transcription of DNA into RNA using the four ribonucleoside triphosphates as substrates. This chain is DNA-directed RNA polymerase subunit Rpo11, found in Sulfolobus acidocaldarius (strain ATCC 33909 / DSM 639 / JCM 8929 / NBRC 15157 / NCIMB 11770).